Reading from the N-terminus, the 593-residue chain is Kelch-like protein 2 (593 aa).

The disordered stretch occupies residues 1–29 (METPPLPPACTKQGHQKPLDSKDENPEKH). Over residues 17 to 29 (KPLDSKDENPEKH) the composition is skewed to basic and acidic residues. The BTB domain occupies 56-123 (CDVTIVAEDM…VYTAEIQVTE (68 aa)). Kelch repeat units lie at residues 308 to 353 (LMVV…YMAG), 354 to 400 (LVFA…VLNG), 402 to 447 (LYAV…VVGG), 449 to 496 (LYAV…VLNN), 497 to 543 (LLYA…AVNG), and 545 to 591 (LYVV…VIDK).

In terms of assembly, component of the BCR(KLHL2) E3 ubiquitin ligase complex, at least composed of CUL3 and KLHL2 and RBX1. Binds actin. Interacts with KLHL12. Interacts (via N-terminus) with FYN (via SH3 domain).

It is found in the cytoplasm. It localises to the cytoskeleton. Its subcellular location is the cell projection. The protein resides in the ruffle. The protein localises to the lamellipodium. It is found in the cytosol. It participates in protein modification; protein ubiquitination. Functionally, substrate-specific adapter of a BCR (BTB-CUL3-RBX1) E3 ubiquitin ligase complex that mediates the ubiquitination of target proteins, such as NPTXR, WNK1, WNK3 and WNK4, leading most often to their proteasomal degradation. The BCR(KLHL2) complex catalyzes ubiquitination and degradation of NPTXR. Responsible for degradative ubiquitination of the WNK kinases WNK1, WNK3 and WNK4. Plays a role in the reorganization of the actin cytoskeleton. Promotes growth of cell projections in oligodendrocyte precursors. This Mus musculus (Mouse) protein is Kelch-like protein 2.